Here is a 184-residue protein sequence, read N- to C-terminus: uncharacterized protein (184 aa).

This sequence belongs to the PhzF family.

The protein localises to the cytoplasm. It localises to the nucleus. This is an uncharacterized protein from Schizosaccharomyces pombe (strain 972 / ATCC 24843) (Fission yeast).